Here is a 62-residue protein sequence, read N- to C-terminus: DNA-binding protein 7 (62 aa).

Belongs to the 7 kDa DNA-binding/endoribonuclease P2 family. Monomer.

Its subcellular location is the cytoplasm. Can constrain negative DNA supercoils. May be involved in maintaining the integrity of the genome at high temperature. In Metallosphaera cuprina (strain Ar-4), this protein is DNA-binding protein 7.